The following is a 1122-amino-acid chain: MLQQKFPAAAKSFFAIDNFTKNLKQDFILSASNEEEALQLYKQALFFSSNENIYYFPSYNTIPYDHTSPNANILSRRAETLIKLTTNNSNSNKLLITHTANLLNKLPPKDFFSKYFLKLSPKMKFTTDELAMFLVENSFTRNASSIDVGEFAVRGEIIDIILSGPKAYRIHFSWGYIESIKEFDIDTQISTKSCRELIISPANEIVLNSETIGNFKNNYLRNFGVNHTDNALYEAVISGRKFTGYEQLLPLFYDSCSNLIDYLNDPIFIFDNLSKKAILEFEHSYNDFYSARSEANKLKFNSFYPTLSPTSLYFTASEITELLEQKNNILLTFENSEQASLIKNIAATSFIEKKTVFDKLFEVIKANSHKKIIIGSSVLSSFERIKSIIQNYEYKYNEINKLDEAKASIINVAIIPLNQSFYTKEYLFITASELLEEKPSSTNTNKKLKNILLELDNLAEGEFVVHKDHGIGQFLKLEALEIKGKPHDFLKILYAGNDKLYIPVESIEVIKKYGNDNAELDKLGSVSWQRSKAKLKKRIKEIALHLIQIAAKRKLNSSASVEFDLEEYDKFCANFPFSETEDQLIAINDIKEDLRNGMLMDRLICGDVGFGKTEVAMRAVFMVAKSLNEHLPQVAVVVPTTILCSQHFSRFIERFKGFGLNIKQLSSVISSKEAKIIRSELESGKINIIIGTHSLLHKNIKFFNLKLLIIDEEQHFGVGQKEFLKSLKSSSHVLAMSATPIPRTLQMSMTGLKELSIIATPPLNRLEVHTSVMPYDPVIIRDALLREHFRGGRSFYVVPRIKDIEDIAKQLKQIVPELSYKIAYGKMTPSKIDEVMSEFYAGKFDILVSTTIIESGIDIAEANTMIIHNADMLGLSQLYQLRGRIGRGKMRGYAYLTVASHKKMTSHSLRRLEIIQNSCALGSGFTIASRDMDLRGFGNLIGEEQSGQIKEVGTELYQEMLEEQIAIFKDESIVSEQPFIPTINLGLSVFIPDNYVADAALKLGLYRRIGNLSNEIEVETFKDEMIDRFGLLPIEFNNLLDIVKIKLLCFKLNIENLDSGDNGFVIKFYKNADMTDKILKFVTTYSNQAKIKPDNKLVYIKKLVDKNIIVEANQLLWNLSEV.

The region spanning 593–758 is the Helicase ATP-binding domain; it reads DLRNGMLMDR…MTGLKELSII (166 aa). 606 to 613 lines the ATP pocket; it reads GDVGFGKT. Residues 711-714 carry the DEEQ box motif; the sequence is DEEQ. Positions 779 to 933 constitute a Helicase C-terminal domain; that stretch reads IIRDALLREH…GFTIASRDMD (155 aa).

In the N-terminal section; belongs to the UvrB family. It in the C-terminal section; belongs to the helicase family. RecG subfamily.

The protein resides in the cytoplasm. Couples transcription and DNA repair by recognizing RNA polymerase (RNAP) stalled at DNA lesions. Mediates ATP-dependent release of RNAP and its truncated transcript from the DNA, and recruitment of nucleotide excision repair machinery to the damaged site. This is Transcription-repair-coupling factor from Rickettsia conorii (strain ATCC VR-613 / Malish 7).